Reading from the N-terminus, the 466-residue chain is Signal recognition particle 54 kDa protein (466 aa).

GTP-binding positions include 104-111, 184-188, and 242-245; these read GLQGSGKT, DTAGR, and TKLD. The tract at residues 446 to 466 is disordered; sequence QQQGGGGMGGLGGGGGLGPFG. Residues 448-466 show a composition bias toward gly residues; sequence QGGGGMGGLGGGGGLGPFG.

Belongs to the GTP-binding SRP family. SRP54 subfamily. As to quaternary structure, part of the signal recognition particle protein translocation system, which is composed of SRP and FtsY. Archaeal SRP consists of a 7S RNA molecule of 300 nucleotides and two protein subunits: SRP54 and SRP19.

It localises to the cytoplasm. The enzyme catalyses GTP + H2O = GDP + phosphate + H(+). Involved in targeting and insertion of nascent membrane proteins into the cytoplasmic membrane. Binds to the hydrophobic signal sequence of the ribosome-nascent chain (RNC) as it emerges from the ribosomes. The SRP-RNC complex is then targeted to the cytoplasmic membrane where it interacts with the SRP receptor FtsY. The polypeptide is Signal recognition particle 54 kDa protein (Haloquadratum walsbyi (strain DSM 16790 / HBSQ001)).